We begin with the raw amino-acid sequence, 106 residues long: Large ribosomal subunit protein P2A (106 aa).

A Glycyl lysine isopeptide (Lys-Gly) (interchain with G-Cter in ubiquitin) cross-link involves residue Lys2. Phosphothreonine is present on Thr16. A phosphoserine mark is found at Ser40 and Ser43. Lys48 participates in a covalent cross-link: Glycyl lysine isopeptide (Lys-Gly) (interchain with G-Cter in ubiquitin). Ser49 carries the phosphoserine modification. The span at 65 to 82 shows a compositional bias: low complexity; it reads PAAGPASAGGAAAASGDA. The tract at residues 65–106 is disordered; that stretch reads PAAGPASAGGAAAASGDAAAEEEKEEEAAEESDDDMGFGLFD. Residues 83–100 are compositionally biased toward acidic residues; that stretch reads AAEEEKEEEAAEESDDDM. Ser96 carries the phosphoserine modification.

This sequence belongs to the eukaryotic ribosomal protein P1/P2 family. Component of the large ribosomal subunit (LSU). Mature yeast ribosomes consist of a small (40S) and a large (60S) subunit. The 40S small subunit contains 1 molecule of ribosomal RNA (18S rRNA) and 33 different proteins (encoded by 57 genes). The large 60S subunit contains 3 rRNA molecules (25S, 5.8S and 5S rRNA) and 46 different proteins (encoded by 81 genes). The 5 acidic ribosomal P-proteins form the stalk structure of the 60S subunit. They are organized as a pentameric complex in which uL10/P0 interacts with 2 heterodimers, P1A-P2B and P1B-P2A. Phosphorylation is not involved in the interaction of the acidic P proteins with the ribosome, however it is suggested to affect the ribosome activity and to participate in a possible ribosome regulatory mechanism. Post-translationally, the N-terminus is not modified.

It is found in the cytoplasm. Component of the ribosome, a large ribonucleoprotein complex responsible for the synthesis of proteins in the cell. The small ribosomal subunit (SSU) binds messenger RNAs (mRNAs) and translates the encoded message by selecting cognate aminoacyl-transfer RNA (tRNA) molecules. The large subunit (LSU) contains the ribosomal catalytic site termed the peptidyl transferase center (PTC), which catalyzes the formation of peptide bonds, thereby polymerizing the amino acids delivered by tRNAs into a polypeptide chain. The nascent polypeptides leave the ribosome through a tunnel in the LSU and interact with protein factors that function in enzymatic processing, targeting, and the membrane insertion of nascent chains at the exit of the ribosomal tunnel. The chain is Large ribosomal subunit protein P2A from Saccharomyces cerevisiae (strain ATCC 204508 / S288c) (Baker's yeast).